Consider the following 235-residue polypeptide: uncharacterized protein (235 aa).

Residues 2-69 (CRLAKIISNA…KPRLWIYYKP (68 aa)) enclose the S4 RNA-binding domain. The active-site Nucleophile is the Asp-102.

The protein belongs to the pseudouridine synthase RsuA family.

It catalyses the reaction a uridine in RNA = a pseudouridine in RNA. This is an uncharacterized protein from Rickettsia prowazekii (strain Madrid E).